Reading from the N-terminus, the 375-residue chain is ATP-sensitive inward rectifier potassium channel 15 (375 aa).

At 1 to 60 (MDAIHIGMSSTPLVKHTAGAGLKANRPRVMSKSGHSNVRIDKVDGIYLLYLQDLWTTVID) the chain is on the cytoplasmic side. The chain crosses the membrane as a helical span at residues 61–87 (MKWRYKLTLFAATFVMTWFLFGVIYYA). The Extracellular segment spans residues 88–113 (IAFIHGDLEPGEPISNHTPCIMKVDS). The helical; Pore-forming intramembrane region spans 114 to 130 (LTGAFLFSLESQTTIGY). Residues 127–132 (TIGYGV) carry the Selectivity filter motif. Topologically, residues 131-139 (GVRSITEEC) are extracellular. The helical transmembrane segment at 140 to 165 (PHAIFLLVAQLVITTLIEIFITGTFL) threads the bilayer. Topologically, residues 166 to 375 (AKIARPKKRA…RTLLLQQSNV (210 aa)) are cytoplasmic.

It belongs to the inward rectifier-type potassium channel (TC 1.A.2.1) family. KCNJ15 subfamily. As to quaternary structure, can form heteromultimeric channels with Kir5.1/KCNJ16. Interacts with PATJ.

The protein resides in the membrane. Its subcellular location is the cell membrane. The enzyme catalyses K(+)(in) = K(+)(out). Channel activity is regulated by variations of cytosolic pH; reversibly inhibited by acidic pH values. Inhibited by Ba(2+) and Cs(+) in a voltage-dependent manner. Functionally, inward rectifier potassium channels are characterized by a greater tendency to allow potassium to flow into the cell rather than out of it. Their voltage dependence is regulated by the concentration of extracellular potassium; as external potassium is raised, the voltage range of the channel opening shifts to more positive voltages. The inward rectification is mainly due to the blockage of outward current by internal magnesium. This Homo sapiens (Human) protein is ATP-sensitive inward rectifier potassium channel 15 (KCNJ15).